The chain runs to 413 residues: Probable Xaa-Pro aminopeptidase UREG_07123 (413 aa).

Residues D194, D205, E340, and E379 each coordinate Mn(2+).

This sequence belongs to the peptidase M24B family. It depends on Mn(2+) as a cofactor.

It catalyses the reaction Release of any N-terminal amino acid, including proline, that is linked to proline, even from a dipeptide or tripeptide.. Functionally, catalyzes the removal of a penultimate prolyl residue from the N-termini of peptides. The polypeptide is Probable Xaa-Pro aminopeptidase UREG_07123 (Uncinocarpus reesii (strain UAMH 1704)).